We begin with the raw amino-acid sequence, 154 residues long: CASP-like protein ARALYDRAFT_485429 (154 aa).

The Cytoplasmic portion of the chain corresponds to 1–12 (MENVPGSFGTSA). The helical transmembrane segment at 13–33 (SFALRFGQTIFSAASLIFMCF) threads the bilayer. Over 34–41 (DYDFYDFT) the chain is Extracellular. A helical transmembrane segment spans residues 42–62 (TFCYLATVMAIVTPWSILLAL). At 63 to 81 (TDTYSVLVKLLPQELRVLS) the chain is on the cytoplasmic side. Residues 82 to 102 (IVFAGDFVLSFLSLGGACAVA) form a helical membrane-spanning segment. Over 103–128 (SATELLASADGKICDGNLCIQYQVSA) the chain is Extracellular. The helical transmembrane segment at 129–149 (ALAFLCWFLLLASALFNFWSL) threads the bilayer. Over 150–154 (PSLYY) the chain is Cytoplasmic.

This sequence belongs to the Casparian strip membrane proteins (CASP) family. In terms of assembly, homodimer and heterodimers.

It is found in the cell membrane. The sequence is that of CASP-like protein ARALYDRAFT_485429 from Arabidopsis lyrata subsp. lyrata (Lyre-leaved rock-cress).